Here is a 184-residue protein sequence, read N- to C-terminus: Peptidyl-tRNA hydrolase (184 aa).

Tyrosine 17 is a tRNA binding site. Histidine 22 serves as the catalytic Proton acceptor. Residues phenylalanine 71, asparagine 73, and asparagine 119 each coordinate tRNA.

It belongs to the PTH family. As to quaternary structure, monomer.

The protein resides in the cytoplasm. The enzyme catalyses an N-acyl-L-alpha-aminoacyl-tRNA + H2O = an N-acyl-L-amino acid + a tRNA + H(+). Its function is as follows. Hydrolyzes ribosome-free peptidyl-tRNAs (with 1 or more amino acids incorporated), which drop off the ribosome during protein synthesis, or as a result of ribosome stalling. In terms of biological role, catalyzes the release of premature peptidyl moieties from peptidyl-tRNA molecules trapped in stalled 50S ribosomal subunits, and thus maintains levels of free tRNAs and 50S ribosomes. The sequence is that of Peptidyl-tRNA hydrolase from Corynebacterium diphtheriae (strain ATCC 700971 / NCTC 13129 / Biotype gravis).